Reading from the N-terminus, the 217-residue chain is Vesicle transport through interaction with t-SNAREs homolog 1A (217 aa).

At 1–192 (MSSDFEGYEQ…GMLRRIIQNR (192 aa)) the chain is on the cytoplasmic side. 2 coiled-coil regions span residues 31-92 (PDEK…KRSR) and 112-178 (ENQR…GKSS). The chain crosses the membrane as a helical; Anchor for type IV membrane protein span at residues 193–213 (ILLVILGIIVVIAILTAIAFF). The Vesicular portion of the chain corresponds to 214–217 (VKGH).

The protein belongs to the VTI1 family. As to quaternary structure, interacts with distinct SNARE complexes that contain either STX5 or STX6. Interacts with NAPA and, to a lesser extent, with NAPG. Identified in a complex containing STX6, STX12, VAMP4 and VTI1A. Widely expressed.

It localises to the golgi apparatus membrane. V-SNARE that mediates vesicle transport pathways through interactions with t-SNAREs on the target membrane. These interactions are proposed to mediate aspects of the specificity of vesicle trafficking and to promote fusion of the lipid bilayers. Involved in vesicular transport from the late endosomes to the trans-Golgi network. Along with VAMP7, involved in an non-conventional RAB1-dependent traffic route to the cell surface used by KCNIP1 and KCND2. May be concerned with increased secretion of cytokines associated with cellular senescence. The chain is Vesicle transport through interaction with t-SNAREs homolog 1A (Vti1a) from Mus musculus (Mouse).